The following is a 199-amino-acid chain: LIM domain-containing protein WLIM2b (199 aa).

LIM zinc-binding domains are found at residues 8 to 68 (QKCK…LFKE) and 106 to 166 (EKCA…LFKE).

Interacts with F-actin. In terms of tissue distribution, expressed in roots, leaves, stems, flowers and siliques. Barely detected in pollen.

The protein localises to the cytoplasm. It localises to the cytoskeleton. In terms of biological role, binds to actin filaments and promotes cross-linking into thick bundles. Has an actin-stabilizing activity. The actin regulatory activities are not regulated by pH and [Ca(2+)]. This Arabidopsis thaliana (Mouse-ear cress) protein is LIM domain-containing protein WLIM2b.